Reading from the N-terminus, the 85-residue chain is RNA-binding protein Hfq (85 aa).

In terms of domain architecture, Sm spans 9–68 (DPFLNALRRERVPVSIYLVNGIKLQGQVESFDQFVILLKNTVSQMVYKHAISTVVPARPF).

This sequence belongs to the Hfq family. In terms of assembly, homohexamer.

RNA chaperone that binds small regulatory RNA (sRNAs) and mRNAs to facilitate mRNA translational regulation in response to envelope stress, environmental stress and changes in metabolite concentrations. Also binds with high specificity to tRNAs. The chain is RNA-binding protein Hfq from Shewanella frigidimarina (strain NCIMB 400).